Reading from the N-terminus, the 555-residue chain is Membrane protein insertase YidC (555 aa).

Residues 7-24 (ILWVIFSMSLVLLYDNWQ) traverse the membrane as a helical segment. A disordered region spans residues 62–81 (APGAAGTAAPAAPQAAAQPT). Transmembrane regions (helical) follow at residues 334–354 (LELV…FWLL), 360–380 (FLGN…LVFF), 430–450 (LGGC…YWVL), 468–488 (LSVP…MFVQ), and 503–523 (VMMI…AGLV).

It belongs to the OXA1/ALB3/YidC family. Type 1 subfamily. Interacts with the Sec translocase complex via SecD. Specifically interacts with transmembrane segments of nascent integral membrane proteins during membrane integration.

The protein localises to the cell inner membrane. Its function is as follows. Required for the insertion and/or proper folding and/or complex formation of integral membrane proteins into the membrane. Involved in integration of membrane proteins that insert both dependently and independently of the Sec translocase complex, as well as at least some lipoproteins. Aids folding of multispanning membrane proteins. The polypeptide is Membrane protein insertase YidC (Cupriavidus necator (strain ATCC 17699 / DSM 428 / KCTC 22496 / NCIMB 10442 / H16 / Stanier 337) (Ralstonia eutropha)).